A 113-amino-acid polypeptide reads, in one-letter code: Large ribosomal subunit protein bL19 (113 aa).

The protein belongs to the bacterial ribosomal protein bL19 family.

Functionally, this protein is located at the 30S-50S ribosomal subunit interface and may play a role in the structure and function of the aminoacyl-tRNA binding site. This Corynebacterium urealyticum (strain ATCC 43042 / DSM 7109) protein is Large ribosomal subunit protein bL19.